We begin with the raw amino-acid sequence, 358 residues long: Peptide chain release factor 1 (358 aa).

The residue at position 234 (Gln-234) is an N5-methylglutamine.

The protein belongs to the prokaryotic/mitochondrial release factor family. Methylated by PrmC. Methylation increases the termination efficiency of RF1.

It is found in the cytoplasm. Its function is as follows. Peptide chain release factor 1 directs the termination of translation in response to the peptide chain termination codons UAG and UAA. The chain is Peptide chain release factor 1 from Akkermansia muciniphila (strain ATCC BAA-835 / DSM 22959 / JCM 33894 / BCRC 81048 / CCUG 64013 / CIP 107961 / Muc).